Consider the following 189-residue polypeptide: MRNVILIGFMGTGKSAVGWRLARILDRPFLDTDSEIERLAGKPVRRIFIEDGEVRFRSEEALLCRKLAVPRGLVVATGGGVVLNPENVANLRAGGVLIGLSADPEVIYQRVRRKKSRPLLRGNVRARIRELLEERAGAYDVAEFTVDTGMHSLPKTVGLIMEFLKERGYLEAGSDSESGGVPELPDISR.

11-16 (GTGKSA) contributes to the ATP binding site. Ser15 is a binding site for Mg(2+). Substrate-binding residues include Asp33, Arg57, and Gly79. An ATP-binding site is contributed by Arg117. Residue Arg135 participates in substrate binding.

Belongs to the shikimate kinase family. As to quaternary structure, monomer. The cofactor is Mg(2+).

It localises to the cytoplasm. It catalyses the reaction shikimate + ATP = 3-phosphoshikimate + ADP + H(+). It functions in the pathway metabolic intermediate biosynthesis; chorismate biosynthesis; chorismate from D-erythrose 4-phosphate and phosphoenolpyruvate: step 5/7. Catalyzes the specific phosphorylation of the 3-hydroxyl group of shikimic acid using ATP as a cosubstrate. This Desulforudis audaxviator (strain MP104C) protein is Shikimate kinase.